The sequence spans 61 residues: Small ribosomal subunit protein bS21 (61 aa).

Belongs to the bacterial ribosomal protein bS21 family.

The protein is Small ribosomal subunit protein bS21 of Leuconostoc mesenteroides subsp. mesenteroides (strain ATCC 8293 / DSM 20343 / BCRC 11652 / CCM 1803 / JCM 6124 / NCDO 523 / NBRC 100496 / NCIMB 8023 / NCTC 12954 / NRRL B-1118 / 37Y).